Here is a 390-residue protein sequence, read N- to C-terminus: Transforming growth factor beta-1 proprotein (390 aa).

The first 29 residues, 1–29 (MPPSGLRLLPLLLPLPWLLVLTPGRPAAG), serve as a signal peptide directing secretion. Residues 30–74 (LSTCKTIDMELVKRKRIEAIRGQILSKLRLASPPSQGEVPPGPLP) are straightjacket domain. The tract at residues 75-271 (EAVLALYNST…ATPLERAQHL (197 aa)) is arm domain. N-linked (GlcNAc...) asparagine glycans are attached at residues asparagine 82, asparagine 136, and asparagine 176. The interval 226–252 (DSKDNVLHVEINGISPKRRGDLGTIHD) is bowtie tail. Positions 244–246 (RGD) match the Cell attachment site motif. Disulfide bonds link cysteine 285/cysteine 294, cysteine 293/cysteine 356, cysteine 322/cysteine 387, and cysteine 326/cysteine 389.

It belongs to the TGF-beta family. Homodimer; disulfide-linked. Interacts with the serine proteases, HTRA1 and HTRA3: the interaction with either inhibits TGFB1-mediated signaling and the HTRA protease activity is required for this inhibition. May interact with THSD4; this interaction may lead to sequestration by FBN1 microfibril assembly and attenuation of TGFB signaling. Interacts with CD109, DPT and ASPN. Interacts with EFEMP2. Interacts with TSKU; the interaction contributes to regulation of the hair cycle. Interacts with TGFBR3. As to quaternary structure, homodimer; disulfide-linked. Interacts with transforming growth factor beta-1 (TGF-beta-1) chain; interaction is non-covalent and maintains TGF-beta-1 in a latent state; each latency-associated peptide (LAP) monomer interacts with TGF-beta-1 in the other monomer. Interacts with LTBP1; leading to regulation of TGF-beta-1 activation. Interacts with LRRC32/GARP; leading to regulation of TGF-beta-1 activation on the surface of activated regulatory T-cells (Tregs). Interacts with LRRC33/NRROS; leading to regulation of TGF-beta-1 activation in macrophages and microglia. Interacts (via cell attachment site) with integrins ITGAV and ITGB6 (ITGAV:ITGB6), leading to release of the active TGF-beta-1. Interacts with NREP; the interaction results in a decrease in TGFB1 autoinduction. Interacts with HSP90AB1; inhibits latent TGFB1 activation. In terms of assembly, homodimer; disulfide-linked. Interacts with TGF-beta receptors (TGFBR1 and TGFBR2), leading to signal transduction. Post-translationally, transforming growth factor beta-1 proprotein: The precursor proprotein is cleaved in the Golgi apparatus by FURIN to form Transforming growth factor beta-1 (TGF-beta-1) and Latency-associated peptide (LAP) chains, which remain non-covalently linked, rendering TGF-beta-1 inactive. N-glycosylated. Deglycosylation leads to activation of Transforming growth factor beta-1 (TGF-beta-1); mechanisms triggering deglycosylation-driven activation of TGF-beta-1 are however unclear. As to expression, abundant in the bone matrix. Expressed in cardiomyocytes.

It localises to the secreted. The protein resides in the extracellular space. Its subcellular location is the extracellular matrix. Its function is as follows. Transforming growth factor beta-1 proprotein: Precursor of the Latency-associated peptide (LAP) and Transforming growth factor beta-1 (TGF-beta-1) chains, which constitute the regulatory and active subunit of TGF-beta-1, respectively. In terms of biological role, required to maintain the Transforming growth factor beta-1 (TGF-beta-1) chain in a latent state during storage in extracellular matrix. Associates non-covalently with TGF-beta-1 and regulates its activation via interaction with 'milieu molecules', such as LTBP1, LRRC32/GARP and LRRC33/NRROS, that control activation of TGF-beta-1. Interaction with LRRC33/NRROS regulates activation of TGF-beta-1 in macrophages and microglia. Interaction with LRRC32/GARP controls activation of TGF-beta-1 on the surface of activated regulatory T-cells (Tregs). Interaction with integrins (ITGAV:ITGB6 or ITGAV:ITGB8) results in distortion of the Latency-associated peptide chain and subsequent release of the active TGF-beta-1. Functionally, multifunctional protein that regulates the growth and differentiation of various cell types and is involved in various processes, such as normal development, immune function, microglia function and responses to neurodegeneration. Activation into mature form follows different steps: following cleavage of the proprotein in the Golgi apparatus, Latency-associated peptide (LAP) and Transforming growth factor beta-1 (TGF-beta-1) chains remain non-covalently linked rendering TGF-beta-1 inactive during storage in extracellular matrix. At the same time, LAP chain interacts with 'milieu molecules', such as LTBP1, LRRC32/GARP and LRRC33/NRROS that control activation of TGF-beta-1 and maintain it in a latent state during storage in extracellular milieus. TGF-beta-1 is released from LAP by integrins (ITGAV:ITGB6 or ITGAV:ITGB8): integrin-binding to LAP stabilizes an alternative conformation of the LAP bowtie tail and results in distortion of the LAP chain and subsequent release of the active TGF-beta-1. Once activated following release of LAP, TGF-beta-1 acts by binding to TGF-beta receptors (TGFBR1 and TGFBR2), which transduce signal. While expressed by many cells types, TGF-beta-1 only has a very localized range of action within cell environment thanks to fine regulation of its activation by Latency-associated peptide chain (LAP) and 'milieu molecules'. Plays an important role in bone remodeling: acts as a potent stimulator of osteoblastic bone formation, causing chemotaxis, proliferation and differentiation in committed osteoblasts. Can promote either T-helper 17 cells (Th17) or regulatory T-cells (Treg) lineage differentiation in a concentration-dependent manner. At high concentrations, leads to FOXP3-mediated suppression of RORC and down-regulation of IL-17 expression, favoring Treg cell development. At low concentrations in concert with IL-6 and IL-21, leads to expression of the IL-17 and IL-23 receptors, favoring differentiation to Th17 cells. Stimulates sustained production of collagen through the activation of CREB3L1 by regulated intramembrane proteolysis (RIP). Mediates SMAD2/3 activation by inducing its phosphorylation and subsequent translocation to the nucleus. Positively regulates odontoblastic differentiation in dental papilla cells, via promotion of IPO7-mediated translocation of phosphorylated SMAD2 to the nucleus and subsequent transcription of target genes. Can induce epithelial-to-mesenchymal transition (EMT) and cell migration in various cell types. The chain is Transforming growth factor beta-1 proprotein (Tgfb1) from Rattus norvegicus (Rat).